The sequence spans 292 residues: Protoheme IX farnesyltransferase (292 aa).

The next 9 membrane-spanning stretches (helical) occupy residues 13–33 (ILFG…QGHV), 35–55 (FLLL…GCVV), 84–104 (TALI…WFWV), 106–126 (PYSF…YSLW), 135–155 (TIIG…AVTH), 161–181 (ALLI…AIAI), 206–226 (VECL…YCFG), 231–251 (FFLL…IIGF), and 263–283 (LFLF…FTYQ).

Belongs to the UbiA prenyltransferase family. Protoheme IX farnesyltransferase subfamily.

The protein localises to the cell inner membrane. It catalyses the reaction heme b + (2E,6E)-farnesyl diphosphate + H2O = Fe(II)-heme o + diphosphate. It functions in the pathway porphyrin-containing compound metabolism; heme O biosynthesis; heme O from protoheme: step 1/1. Converts heme B (protoheme IX) to heme O by substitution of the vinyl group on carbon 2 of heme B porphyrin ring with a hydroxyethyl farnesyl side group. This Acinetobacter baylyi (strain ATCC 33305 / BD413 / ADP1) protein is Protoheme IX farnesyltransferase.